The chain runs to 674 residues: Polyunsaturated fatty acid 5-lipoxygenase (674 aa).

One can recognise a PLAT domain in the interval 2–118 (PSYTVTVATG…EIVLRDGRAK (117 aa)). Residues Gly-17, Thr-18, Asp-19, Asn-44, Asp-45, Glu-47, Asp-79, and Asp-80 each coordinate Ca(2+). Positions 119-674 (LARDDQIHIL…PDRIPNSVAI (556 aa)) constitute a Lipoxygenase domain. Ser-272 bears the Phosphoserine mark. Fe cation-binding residues include His-368 and His-373. At Ser-524 the chain carries Phosphoserine. Fe cation is bound by residues His-551, Asn-555, and Ile-674.

The protein belongs to the lipoxygenase family. In terms of assembly, homodimer. Interacts with ALOX5AP and LTC4S. Interacts with COTL1, the interaction is required for stability and efficient catalytic activity. Interacts with PIK3R1; this interaction bridges ALOX5 with CD40 after CD40 ligation in B cells and leads to the production of reactive oxygen species (ROS). Interacts (via PLAT domain) with DICER1 (via Dicer dsRNA-binding fold domain); this interaction enhances arachidonate 5-lipoxygenase activity and modifies the miRNA precursor processing activity of DICER1. Fe cation serves as cofactor. In terms of processing, serine phosphorylation by MAPKAPK2 is stimulated by arachidonic acid. Phosphorylation on Ser-524 by PKA has an inhibitory effect. Phosphorylation on Ser-272 prevents export from the nucleus. Phosphorylation at Ser-524 is stimulated by 8-bromo-3',5'-cyclic AMP or prostaglandin E2. In terms of tissue distribution, expressed in skin Langerhans cells and their emigrated counterparts in draining lymph nodes. Highly expressed in circulating leukocytes.

The protein localises to the cytoplasm. The protein resides in the nucleus matrix. Its subcellular location is the nucleus membrane. It localises to the perinuclear region. It is found in the cytosol. The protein localises to the nucleus envelope. The protein resides in the nucleus intermembrane space. It carries out the reaction (5Z,8Z,11Z,14Z)-eicosatetraenoate + O2 = (5S)-hydroperoxy-(6E,8Z,11Z,14Z)-eicosatetraenoate. It catalyses the reaction (5Z,8Z,11Z,14Z)-eicosatetraenoate + O2 = leukotriene A4 + H2O. The catalysed reaction is (5Z,8Z,11Z,14Z)-eicosatetraenoate + O2 = (8S)-hydroperoxy-(5Z,9E,11Z,14Z)-eicosatetraenoate. The enzyme catalyses (5Z,8Z,11Z,14Z)-eicosatetraenoate + O2 = (12S)-hydroperoxy-(5Z,8Z,10E,14Z)-eicosatetraenoate. It carries out the reaction 18-HEPE + O2 = (5S)-hydroperoxy-18-hydroxy-(7E,9E,11Z,14Z,16E)-eicosapentaenoate. It catalyses the reaction (18R)-hydroxy-(5Z,8Z,11Z,14Z,16E)-eicosapentaenoate + O2 = (5S)-hydroperoxy-(18R)-hydroxy-(6E,8Z,11Z,14Z,16E)-eicosapentaenoate. The catalysed reaction is (18S)-hydroxy-(5Z,8Z,11Z,14Z,16E)-eicosapentaenoate + O2 = (5S)-hydroperoxy-(18S)-hydroxy-(6E,8Z,11Z,14Z,16E)-eicosapentaenoate. The enzyme catalyses (5S)-hydroperoxy-(18S)-hydroxy-(6E,8Z,11Z,14Z,16E)-eicosapentaenoate = (5S,6S)-epoxy-(18S)-hydroxy-(7E,9E,11Z,14Z,16E)-eicosapentaenoate + H2O. It carries out the reaction (5S)-hydroperoxy-(18R)-hydroxy-(6E,8Z,11Z,14Z,16E)-eicosapentaenoate = (5S,6S)-epoxy-(18R)-hydroxy-(7E,9E,11Z,14Z,16E)-eicosapentaenoate + H2O. It catalyses the reaction (5S)-hydroperoxy-18-hydroxy-(7E,9E,11Z,14Z,16E)-eicosapentaenoate = (5S,6S)-epoxy-18-hydroxy-(7E,9E,11Z,14Z,16E)-eicosapentaenoate + H2O. The catalysed reaction is (15S)-hydroxy-(5Z,8Z,11Z,13E)-eicosatetraenoate + O2 = (5S)-hydroperoxy-(15S)-hydroxy-(6E,8Z,11Z,13E)-eicosatetraenoate. The enzyme catalyses (5S)-hydroperoxy-(6E,8Z,11Z,14Z)-eicosatetraenoate = leukotriene A4 + H2O. It carries out the reaction (5Z,8Z)-eicosadienoate + O2 = (5S)-hydroperoxy-(6E,8Z)-eicosadienoate. It catalyses the reaction (12S)-hydroxy-(5Z,8Z,10E,14Z)-eicosatetraenoate + O2 = (5S)-hydroperoxy-(12S)-hydroxy-(6E,8Z,10E,14Z)-eicosatetraenoate. The catalysed reaction is (5Z,8Z,11Z,14Z,17Z)-eicosapentaenoate + O2 = 5-hydroperoxy-(6E,8Z,11Z,14Z,17Z)-eicosapentaenoate. The enzyme catalyses (4Z,7Z,10Z,13Z,16Z,19Z)-docosahexaenoate + O2 = (14S)-hydroperoxy-(4Z,7Z,10Z,12E,16Z,19Z)-docosahexaenoate. It carries out the reaction (4Z,7Z,10Z,13Z,16Z,19Z)-docosahexaenoate + O2 = (7S)-hydroperoxy-(4Z,8E,10Z,13Z,16Z,19Z)-docosahexaenoate. It catalyses the reaction (4Z,7Z,10Z,13Z,16Z,19Z)-docosahexaenoate + O2 = (17S)-hydroperoxy-(4Z,7Z,10Z,13Z,15E,19Z)-docosahexaenoate. Its pathway is lipid metabolism; leukotriene A4 biosynthesis. In terms of biological role, catalyzes the oxygenation of arachidonate to 5-hydroperoxyeicosatetraenoate (5-HPETE) followed by the dehydration to 5,6- epoxyeicosatetraenoate (Leukotriene A4/LTA4), the first two steps in the biosynthesis of leukotrienes, which are potent mediators of inflammation. Also catalyzes the oxygenation of arachidonic acid into 8-hydroperoxyicosatetraenoic acid (8-HPETE) and 12-hydroperoxyicosatetraenoic acid (12-HPETE). Displays lipoxin synthase activity being able to convert (15S)-HETE into a conjugate tetraene. Although arachidonate is the preferred substrate, this enzyme can also metabolize oxidized fatty acids derived from arachidonate such as (15S)-HETE, eicosapentaenoate (EPA) such as (18R)- and (18S)-HEPE or docosahexaenoate (DHA) which lead to the formation of specialized pro-resolving mediators (SPM) lipoxin and resolvins E and D respectively, therefore it participates in anti-inflammatory responses. Oxidation of DHA directly inhibits endothelial cell proliferation and sprouting angiogenesis via peroxisome proliferator-activated receptor gamma (PPARgamma). It does not catalyze the oxygenation of linoleic acid and does not convert (5S)-HETE to lipoxin isomers. In addition to inflammatory processes, participates in dendritic cell migration, wound healing through an antioxidant mechanism based on heme oxygenase-1 (HO-1) regulation expression, monocyte adhesion to the endothelium via ITGAM expression on monocytes. Moreover, it helps establish an adaptive humoral immunity by regulating primary resting B cells and follicular helper T cells and participates in the CD40-induced production of reactive oxygen species (ROS) after CD40 ligation in B cells through interaction with PIK3R1 that bridges ALOX5 with CD40. May also play a role in glucose homeostasis, regulation of insulin secretion and palmitic acid-induced insulin resistance via AMPK. Can regulate bone mineralization and fat cell differentiation increases in induced pluripotent stem cells. This chain is Polyunsaturated fatty acid 5-lipoxygenase, found in Mus musculus (Mouse).